The sequence spans 86 residues: Candiduxin-1 (86 aa).

Positions 1-21 are cleaved as a signal peptide; that stretch reads MKTLLLTLVVLTIACLDLGYT. 4 cysteine pairs are disulfide-bonded: Cys-24–Cys-45, Cys-38–Cys-62, Cys-66–Cys-78, and Cys-79–Cys-84.

The protein belongs to the three-finger toxin family. Short-chain subfamily. Orphan group IX sub-subfamily. As to expression, expressed by the venom gland.

It is found in the secreted. The chain is Candiduxin-1 from Bungarus candidus (Malayan krait).